Reading from the N-terminus, the 306-residue chain is Ribonuclease Z (306 aa).

Residues His63, His65, Asp67, His68, His140, Asp211, and His269 each coordinate Zn(2+). The Proton acceptor role is filled by Asp67.

It belongs to the RNase Z family. Homodimer. Zn(2+) is required as a cofactor.

It carries out the reaction Endonucleolytic cleavage of RNA, removing extra 3' nucleotides from tRNA precursor, generating 3' termini of tRNAs. A 3'-hydroxy group is left at the tRNA terminus and a 5'-phosphoryl group is left at the trailer molecule.. Its function is as follows. Zinc phosphodiesterase, which displays some tRNA 3'-processing endonuclease activity. Probably involved in tRNA maturation, by removing a 3'-trailer from precursor tRNA. This chain is Ribonuclease Z, found in Listeria welshimeri serovar 6b (strain ATCC 35897 / DSM 20650 / CCUG 15529 / CIP 8149 / NCTC 11857 / SLCC 5334 / V8).